A 164-amino-acid polypeptide reads, in one-letter code: MSTKTNSTKATSEKTDSLKTNRGTKSSAGYSDQNIPLGGCILADTPITFNENKPVTKVKVRNTGDRPIQVGSHFHFFEANRALEFDRAAAYGKRLNISSTTAIRFEPGDETEVPLIPFGGKQTLYGFNNLVDGWTGEGVVPNSERPDKLEAIRRAAERGFKSSK.

Polar residues-rich tracts occupy residues 1–10 (MSTKTNSTKA) and 20–30 (TNRGTKSSAGY). Positions 1 to 30 (MSTKTNSTKATSEKTDSLKTNRGTKSSAGY) are disordered.

Belongs to the urease beta subunit family. In terms of assembly, heterotrimer of UreA (gamma), UreB (beta) and UreC (alpha) subunits. Three heterotrimers associate to form the active enzyme.

It is found in the cytoplasm. It catalyses the reaction urea + 2 H2O + H(+) = hydrogencarbonate + 2 NH4(+). Its pathway is nitrogen metabolism; urea degradation; CO(2) and NH(3) from urea (urease route): step 1/1. Expression of the urease operon increases the likelihood of bacterial survival by contributing to acid resistance in vitro and in vivo in BALB/c mice. Y.enterocolitica enters the body via an oral path and must survive the acidic stomach before being able to colonize the intestinal mucosa. The chain is Urease subunit beta from Yersinia enterocolitica.